A 249-amino-acid chain; its full sequence is LexA repressor (249 aa).

The interval 1-26 (MAAQATGGRATQRSQQSPAKPKGLTV) is disordered. The span at 9–18 (RATQRSQQSP) shows a compositional bias: polar residues. Residues 48-68 (MREIGDTVGLASLSSVTHQLS) constitute a DNA-binding region (H-T-H motif). Active-site for autocatalytic cleavage activity residues include serine 173 and lysine 210.

This sequence belongs to the peptidase S24 family. As to quaternary structure, homodimer.

It catalyses the reaction Hydrolysis of Ala-|-Gly bond in repressor LexA.. In terms of biological role, represses a number of genes involved in the response to DNA damage (SOS response), including recA and lexA. In the presence of single-stranded DNA, RecA interacts with LexA causing an autocatalytic cleavage which disrupts the DNA-binding part of LexA, leading to derepression of the SOS regulon and eventually DNA repair. The sequence is that of LexA repressor from Arthrobacter sp. (strain FB24).